Here is a 586-residue protein sequence, read N- to C-terminus: Pyruvate kinase (586 aa).

Arg-32 lines the substrate pocket. K(+) is bound by residues Asn-34, Ser-36, Asp-66, and Thr-67. 34–37 contributes to the ATP binding site; that stretch reads NFSH. Positions 73 and 156 each coordinate ATP. A Mg(2+)-binding site is contributed by Glu-222. Residues Gly-245, Asp-246, and Thr-278 each contribute to the substrate site. Asp-246 contributes to the Mg(2+) binding site.

This sequence belongs to the pyruvate kinase family. In the C-terminal section; belongs to the PEP-utilizing enzyme family. Mg(2+) is required as a cofactor. The cofactor is K(+).

It carries out the reaction pyruvate + ATP = phosphoenolpyruvate + ADP + H(+). It functions in the pathway carbohydrate degradation; glycolysis; pyruvate from D-glyceraldehyde 3-phosphate: step 5/5. The sequence is that of Pyruvate kinase (pyk) from Staphylococcus saprophyticus subsp. saprophyticus (strain ATCC 15305 / DSM 20229 / NCIMB 8711 / NCTC 7292 / S-41).